The following is a 110-amino-acid chain: Protein RnfH (110 aa).

A disordered region spans residues 86 to 110; that stretch reads RQRRVEKSRQEGSVEGRKWLPKDSR. Over residues 88-110 the composition is skewed to basic and acidic residues; it reads RRVEKSRQEGSVEGRKWLPKDSR.

Belongs to the UPF0125 (RnfH) family.

The protein is Protein RnfH of Paraburkholderia phymatum (strain DSM 17167 / CIP 108236 / LMG 21445 / STM815) (Burkholderia phymatum).